We begin with the raw amino-acid sequence, 426 residues long: uncharacterized protein (426 aa).

Positions 23 to 42 (ENPRPTNNPSTSHPSDSYST) are disordered. A compositionally biased stretch (polar residues) spans 26–42 (RPTNNPSTSHPSDSYST).

The protein belongs to the serpin family.

This is an uncharacterized protein from Thermococcus kodakarensis (strain ATCC BAA-918 / JCM 12380 / KOD1) (Pyrococcus kodakaraensis (strain KOD1)).